The primary structure comprises 500 residues: Glutamate--tRNA ligase (500 aa).

Residues 12 to 22 carry the 'HIGH' region motif; it reads PSPTGHLHIGN. The 'KMSKS' region motif lies at 259-263; sequence KLSKR. Lysine 262 serves as a coordination point for ATP.

The protein belongs to the class-I aminoacyl-tRNA synthetase family. Glutamate--tRNA ligase type 1 subfamily. In terms of assembly, monomer.

Its subcellular location is the cytoplasm. It catalyses the reaction tRNA(Glu) + L-glutamate + ATP = L-glutamyl-tRNA(Glu) + AMP + diphosphate. Its function is as follows. Catalyzes the attachment of glutamate to tRNA(Glu) in a two-step reaction: glutamate is first activated by ATP to form Glu-AMP and then transferred to the acceptor end of tRNA(Glu). This Lactobacillus delbrueckii subsp. bulgaricus (strain ATCC BAA-365 / Lb-18) protein is Glutamate--tRNA ligase.